We begin with the raw amino-acid sequence, 313 residues long: Ribosomal RNA small subunit methyltransferase H (313 aa).

S-adenosyl-L-methionine-binding positions include 37 to 39 (GGH), D57, F82, D104, and Q111.

It belongs to the methyltransferase superfamily. RsmH family.

It is found in the cytoplasm. It catalyses the reaction cytidine(1402) in 16S rRNA + S-adenosyl-L-methionine = N(4)-methylcytidine(1402) in 16S rRNA + S-adenosyl-L-homocysteine + H(+). Specifically methylates the N4 position of cytidine in position 1402 (C1402) of 16S rRNA. This chain is Ribosomal RNA small subunit methyltransferase H, found in Alteromonas mediterranea (strain DSM 17117 / CIP 110805 / LMG 28347 / Deep ecotype).